The chain runs to 115 residues: NADH-ubiquinone oxidoreductase chain 3 (115 aa).

Methionine 1 carries the post-translational modification N-formylmethionine. 3 consecutive transmembrane segments (helical) span residues 3 to 23 (LMLA…IAFW), 55 to 75 (FFLV…LLPL), and 84 to 104 (LNTM…SLAY).

Core subunit of respiratory chain NADH dehydrogenase (Complex I) which is composed of 45 different subunits. Interacts with TMEM186. Interacts with TMEM242.

The protein localises to the mitochondrion inner membrane. It carries out the reaction a ubiquinone + NADH + 5 H(+)(in) = a ubiquinol + NAD(+) + 4 H(+)(out). Its function is as follows. Core subunit of the mitochondrial membrane respiratory chain NADH dehydrogenase (Complex I) which catalyzes electron transfer from NADH through the respiratory chain, using ubiquinone as an electron acceptor. Essential for the catalytic activity of complex I. This Bos taurus (Bovine) protein is NADH-ubiquinone oxidoreductase chain 3.